The sequence spans 432 residues: Glutamyl-tRNA reductase (432 aa).

Substrate contacts are provided by residues 49-52 (TCNR), Ser109, 114-116 (EGQ), and Gln120. Cys50 functions as the Nucleophile in the catalytic mechanism. 198-203 (GAGRMS) provides a ligand contact to NADP(+).

This sequence belongs to the glutamyl-tRNA reductase family. Homodimer.

The catalysed reaction is (S)-4-amino-5-oxopentanoate + tRNA(Glu) + NADP(+) = L-glutamyl-tRNA(Glu) + NADPH + H(+). The protein operates within porphyrin-containing compound metabolism; protoporphyrin-IX biosynthesis; 5-aminolevulinate from L-glutamyl-tRNA(Glu): step 1/2. It functions in the pathway porphyrin-containing compound metabolism; chlorophyll biosynthesis. Functionally, catalyzes the NADPH-dependent reduction of glutamyl-tRNA(Glu) to glutamate 1-semialdehyde (GSA). This is Glutamyl-tRNA reductase from Synechococcus sp. (strain CC9902).